The primary structure comprises 360 residues: Probable mannan endo-1,4-beta-mannosidase A (360 aa).

The N-terminal stretch at 1-18 (MKLSQILTFASLLSGALA) is a signal peptide. 2 residues coordinate substrate: Asn142 and Asn178. The active-site Proton donor is the Glu179. A substrate-binding site is contributed by Tyr254. Residue Glu287 is the Nucleophile of the active site. Asn307 is a glycosylation site (N-linked (GlcNAc...) asparagine). Trp317 provides a ligand contact to substrate.

It belongs to the glycosyl hydrolase 5 (cellulase A) family.

The protein localises to the secreted. The catalysed reaction is Random hydrolysis of (1-&gt;4)-beta-D-mannosidic linkages in mannans, galactomannans and glucomannans.. Its function is as follows. Endo-1,4-mannanase, a crucial enzyme for depolymerization of seed galactomannans and wood galactoglucomannans. The polypeptide is Probable mannan endo-1,4-beta-mannosidase A (manA) (Aspergillus clavatus (strain ATCC 1007 / CBS 513.65 / DSM 816 / NCTC 3887 / NRRL 1 / QM 1276 / 107)).